The sequence spans 291 residues: Undecaprenyl-diphosphatase (291 aa).

A run of 8 helical transmembrane segments spans residues 1–21, 48–68, 100–120, 124–144, 160–180, 201–221, 230–250, and 270–290; these read MIIIEFIKGLILGIVEGLTEF, SAFTFKVVIQLGSVFAAAWVF, LHVLVGMIPAGILGVLFDDFI, LFSVPTVMIGLFLGAIYMIIA, INYVQAFVIGISQAVAMWPGF, SDFTFIMAVPIMLAASALSLV, AHIPFYLIGFLAAFIVGLIAI, and IVLVIIIAILYFGFGIGQGIS.

It belongs to the UppP family.

Its subcellular location is the cell membrane. The catalysed reaction is di-trans,octa-cis-undecaprenyl diphosphate + H2O = di-trans,octa-cis-undecaprenyl phosphate + phosphate + H(+). Its function is as follows. Catalyzes the dephosphorylation of undecaprenyl diphosphate (UPP). Confers resistance to bacitracin. This chain is Undecaprenyl-diphosphatase, found in Staphylococcus haemolyticus (strain JCSC1435).